A 379-amino-acid polypeptide reads, in one-letter code: Probable G-protein coupled receptor No18 (379 aa).

At 5–36 the chain is on the extracellular side; that stretch reads EASITGRTAPELNASAAPLDDERELGETVAAT. The N-linked (GlcNAc...) asparagine glycan is linked to N17. The helical transmembrane segment at 37–58 threads the bilayer; sequence ALLLAIILVTIVGNSLVIISVF. At 59-68 the chain is on the cytoplasmic side; that stretch reads TYRPLRSVQN. The chain crosses the membrane as a helical span at residues 69-90; that stretch reads FFVVSLAVADLTVALFVLPLNV. Topologically, residues 91–107 are extracellular; it reads AYRLLNQWLLGSYLCQM. An intrachain disulfide couples C105 to C184. The chain crosses the membrane as a helical span at residues 108 to 128; that stretch reads WLTCDILCCTSSILNLCVIAL. Over 129 to 148 the chain is Cytoplasmic; that stretch reads DRYWAITDPINYAQKRTIRR. The chain crosses the membrane as a helical span at residues 149-171; sequence VNTMIAAVWALSLVISVPPLLGW. At 172–196 the chain is on the extracellular side; sequence NDWPAQFTEDTPCTLTQERLFVVYS. Residues 197 to 218 form a helical membrane-spanning segment; the sequence is SSGSFFIPLIIMSVVYAKIFFA. Topologically, residues 219-303 are cytoplasmic; it reads TKRRLRERTR…LSKERKAARV (85 aa). The tract at residues 234 to 276 is disordered; the sequence is AVPAPPQRTSSRPLAELESVASQEDETEPSPEPEPLSSRADKP. The chain crosses the membrane as a helical span at residues 304–325; the sequence is LGVIMGVFVVCWLPFFLMYAIV. Topologically, residues 326–340 are extracellular; sequence PFCTNCAPPSQRVVD. A helical membrane pass occupies residues 341–362; sequence FVTWLGYVNSSLNPIIYTIYNK. Topologically, residues 363-375 are cytoplasmic; the sequence is DFRTAFSRLLRCD.

Belongs to the G-protein coupled receptor 1 family.

The protein localises to the cell membrane. Functionally, probable G-protein coupled receptor for an amine. The protein is Probable G-protein coupled receptor No18 of Amphibalanus amphitrite (Striped barnacle).